The primary structure comprises 449 residues: L10-interacting MYB domain-containing protein (449 aa).

The Myb-like domain occupies 162-225; sequence SNPQTKGYWS…YTRPQLKNHW (64 aa). Positions 297–324 are disordered; it reads TYTPPSRSRKKLLHNRSESPQWRDTTPL. Residues 314-324 are compositionally biased toward polar residues; sequence ESPQWRDTTPL.

In terms of assembly, interacts with RPL10A. As to expression, expressed in seedlings, leaves, roots, stems and flowers.

The protein localises to the nucleus. Functionally, transcriptional repressor that associates with ribosomal protein promoters. This chain is L10-interacting MYB domain-containing protein, found in Arabidopsis thaliana (Mouse-ear cress).